Reading from the N-terminus, the 419-residue chain is Transcription termination factor Rho (419 aa).

A Rho RNA-BD domain is found at 48 to 123; that stretch reads DIFGDGVLEI…LKVNEVNYDK (76 aa). 3 RNA-binding regions span residues 61 to 66, 78 to 80, and 108 to 110; these read GFGFLR, DIY, and ERY. ATP is bound by residues 169–174, 181–186, and arginine 212; these read GRGQRG and KAGKTM. The RNA-binding 2 stretch occupies residues 284 to 288; the sequence is VLTGG.

It belongs to the Rho family. In terms of assembly, homohexamer. The homohexamer assembles into an open ring structure.

Functionally, facilitates transcription termination by a mechanism that involves Rho binding to the nascent RNA, activation of Rho's RNA-dependent ATPase activity, and release of the mRNA from the DNA template. The polypeptide is Transcription termination factor Rho (Salmonella typhi).